The chain runs to 357 residues: MLDKLEFTENKYEELSIKISDPSVMANQNEWRKLCKEHAELETIVTKYREYKTNKEELEANKEMLSEETDKDMKEMIQEEIKTLEESIVKDQEELKILLLPKDPNDDKNVFIEIRAGAGGDEAALFAANLFRMYTRYAERHGWKTELMSANETDIGGFKEVVFMLRGDCAYSKMKFESGVHRVQRVPDTESSGRIHTSTATVAVLPEVDDVDIQIDPNDIRVDVFRASGHGGQCVNTTDSAVRMTHIPTGIVVSCQDEKSQLKNKEKAMKVLKARLYEKAEAERSASISADRKSQVGTGDRSERIRTYNYPQGRVTEHRIGLTLYKLEAFLDGDMEEVIDALITAEQAEKMKAMGNN.

Residue glutamine 233 is modified to N5-methylglutamine. The segment at 284–305 (RSASISADRKSQVGTGDRSERI) is disordered.

Belongs to the prokaryotic/mitochondrial release factor family. In terms of processing, methylated by PrmC. Methylation increases the termination efficiency of RF1.

The protein localises to the cytoplasm. In terms of biological role, peptide chain release factor 1 directs the termination of translation in response to the peptide chain termination codons UAG and UAA. This is Peptide chain release factor 1 from Clostridium novyi (strain NT).